An 802-amino-acid chain; its full sequence is Sucrose synthase 1 (802 aa).

Residues Met-272–Thr-749 are GT-B glycosyltransferase.

This sequence belongs to the glycosyltransferase 1 family. Plant sucrose synthase subfamily.

The catalysed reaction is an NDP-alpha-D-glucose + D-fructose = a ribonucleoside 5'-diphosphate + sucrose + H(+). Sucrose-cleaving enzyme that provides UDP-glucose and fructose for various metabolic pathways. Most active in the sink tissues where it is responsible for the breakdown of the arriving sucrose. This chain is Sucrose synthase 1 (SH-1), found in Zea mays (Maize).